The primary structure comprises 227 residues: MSQDLSHVPESIRMVLIGPPGAGKGTQAPNLTERFCACHLATGDMLRSQVAKQTPLGIEAKKIMDDGKLVSDEIMINMIKDELTNNQDCKKGFILDGFPRTIPQAEKLDEMLAQQGRPLEKAVELKIDDELLVSRITGRLVHPASGRSYHKVFNPPKTEMKDDITGEDLVQRSDDNVEALKKRLTSYHKQTEPIVDFYKKTGIWAGVDASQPPKTVWSDILKCLGKN.

Residue 21-26 (GAGKGT) participates in ATP binding. The NMP stretch occupies residues 41-70 (ATGDMLRSQVAKQTPLGIEAKKIMDDGKLV). AMP contacts are provided by residues threonine 42, arginine 47, 68–70 (KLV), 97–100 (GFPR), and glutamine 104. The segment at 138–175 (GRLVHPASGRSYHKVFNPPKTEMKDDITGEDLVQRSDD) is LID. Residues arginine 139 and 148 to 149 (SY) contribute to the ATP site. Arginine 172 and arginine 183 together coordinate AMP. Glutamine 211 contributes to the ATP binding site.

This sequence belongs to the adenylate kinase family. AK2 subfamily. As to quaternary structure, monomer.

It localises to the cytoplasm. The protein localises to the cytosol. Its subcellular location is the mitochondrion intermembrane space. The enzyme catalyses AMP + ATP = 2 ADP. Functionally, catalyzes the reversible transfer of the terminal phosphate group between ATP and AMP. Plays an important role in cellular energy homeostasis and in adenine nucleotide metabolism. Adenylate kinase activity is critical for regulation of the phosphate utilization and the AMP de novo biosynthesis pathways. This chain is Adenylate kinase, found in Kluyveromyces lactis (strain ATCC 8585 / CBS 2359 / DSM 70799 / NBRC 1267 / NRRL Y-1140 / WM37) (Yeast).